Consider the following 229-residue polypeptide: Lipoprotein-releasing system ATP-binding protein LolD 1 (229 aa).

The ABC transporter domain maps to 2–229 (LVVSELSKSY…VRRGRFGITA (228 aa)). Position 38–45 (38–45 (GPSGSGKT)) interacts with ATP.

The protein belongs to the ABC transporter superfamily. Lipoprotein translocase (TC 3.A.1.125) family. The complex is composed of two ATP-binding proteins (LolD) and two transmembrane proteins (LolC and LolE).

The protein resides in the cell inner membrane. Functionally, part of the ABC transporter complex LolCDE involved in the translocation of mature outer membrane-directed lipoproteins, from the inner membrane to the periplasmic chaperone, LolA. Responsible for the formation of the LolA-lipoprotein complex in an ATP-dependent manner. In Rhodopirellula baltica (strain DSM 10527 / NCIMB 13988 / SH1), this protein is Lipoprotein-releasing system ATP-binding protein LolD 1.